Consider the following 653-residue polypeptide: MDLHTAVYNAARDGKLQLLQKLLSGRSREELEELTGEVASGGTPLLIAARYGHLDVVEYLVDRCGASVEAGGSVHFDGEIIEGAPPLWAASAAGHLDVVRSLLRRGASVNRTTRTNSTPLRAACFDGHLEVVRYLVGEHQADLEVANRHGHTCLMISCYKGHREIARYLLEQGAQVNRRSAKGNTALHDCAESGSLEILQLLLGCNARMERDGYGMTPLLAASVTGHTNIVEYLIQEQPAGDEQAQPGLARVQPQGARSSPEEPPSGESYESCCPTSREAAVEALELLGATYVDKKRDLLGALKHWRRAMELRHQGGEYLPKPEPPQLVLAYDYSREVNTTEELEALITDPDEMRMQALLIRERILGPSHPDTSYYIRYRGAVYADSGNFERCIRLWKYALDMQQNNLEPLSPMTASSFLSFAELFSYVLQDRSAKGSLGTPIGFADLMGVLCKGVREVERALQLPKEPGDSAQFTKALAIILHLLYLLEKVECTPDQEHLKHQTVYRLLKCAPRGKNGFTPLHMAVDAETTNVGRYPVGRFPSLQVVKVLLDCGADPDSRDFDNNTPLHIAAQNNCPGIMNALIEAGAHMDATNAFKKTAYELLDEKLLAKSTIQPFNYVTLQCLAARALDKNKIPYKGFIPEELEAFIELH.

ANK repeat units follow at residues 2 to 31 (DLHT…REEL), 40 to 70 (SGGT…SVEA), 82 to 111 (EGAP…SVNR), 115 to 145 (TNST…DLEV), 149 to 178 (HGHT…QVNR), 182 to 211 (KGNT…RMER), and 214 to 243 (YGMT…AGDE). Serine 108 carries the phosphoserine modification. Residues 242 to 274 (DEQAQPGLARVQPQGARSSPEEPPSGESYESCC) form a disordered region. 2 TPR repeats span residues 282-316 (VEAL…RHQG) and 374-407 (SYYI…QQNN). ANK repeat units follow at residues 518–560 (NGFT…DPDS) and 564–593 (DNNT…HMDA).

The protein belongs to the fem-1 family. As to quaternary structure, component of a CRL2 E3 ubiquitin-protein ligase complex, also named ECS (Elongin BC-CUL2/5-SOCS-box protein) complex, composed of CUL2, Elongin BC (ELOB and ELOC), RBX1 and substrate-specific adapter FEM1A. Interacts with PTGER4. Interacts with NFKB1; the interaction is direct. Post-translationally, phosphorylated; highly phosphorylated in myoblasts and myotubes. Phosphorylation at Ser-108 promotes PGE2-EP4-mediated inhibition of inflammation. Dephosphorylated by protein phosphatase 2A (PP2A).

It is found in the mitochondrion. The protein localises to the cytoplasm. It functions in the pathway protein modification; protein ubiquitination. Its function is as follows. Substrate-recognition component of a Cul2-RING (CRL2) E3 ubiquitin-protein ligase complex of the DesCEND (destruction via C-end degrons) pathway, which recognizes a C-degron located at the extreme C terminus of target proteins, leading to their ubiquitination and degradation. The C-degron recognized by the DesCEND pathway is usually a motif of less than ten residues and can be present in full-length proteins, truncated proteins or proteolytically cleaved forms. The CRL2(FEM1A) complex specifically recognizes proteins with an arginine at the C-terminus: recognizes and binds proteins ending with -Lys/Arg-Xaa-Arg and -Lys/Arg-Xaa-Xaa-Arg C-degrons, such as SIL1 or OR51B2, leading to their ubiquitination and degradation. Involved in PGE2-EP4-mediated inhibition of inflammation of macrophages via interaction with NFKB1 and PTGER4. Promotes inflammation in brain microglia through MAP2K4/MKK4-mediated signaling. The polypeptide is Protein fem-1 homolog A (Bos taurus (Bovine)).